We begin with the raw amino-acid sequence, 89 residues long: uncharacterized protein (89 aa).

The next 3 helical transmembrane spans lie at 5–27 (TLTE…GFTA), 32–51 (LYIG…KRLL), and 63–85 (LFFS…ALVA).

The protein resides in the cell membrane. This is an uncharacterized protein from Bacillus subtilis (strain 168).